Consider the following 72-residue polypeptide: Translation initiation factor IF-1 (72 aa).

Residues 1-72 enclose the S1-like domain; it reads MAKDDVIEIE…TKGRITYRFK (72 aa).

The protein belongs to the IF-1 family. Component of the 30S ribosomal translation pre-initiation complex which assembles on the 30S ribosome in the order IF-2 and IF-3, IF-1 and N-formylmethionyl-tRNA(fMet); mRNA recruitment can occur at any time during PIC assembly.

The protein localises to the cytoplasm. Its function is as follows. One of the essential components for the initiation of protein synthesis. Stabilizes the binding of IF-2 and IF-3 on the 30S subunit to which N-formylmethionyl-tRNA(fMet) subsequently binds. Helps modulate mRNA selection, yielding the 30S pre-initiation complex (PIC). Upon addition of the 50S ribosomal subunit IF-1, IF-2 and IF-3 are released leaving the mature 70S translation initiation complex. The protein is Translation initiation factor IF-1 of Ligilactobacillus salivarius (strain UCC118) (Lactobacillus salivarius).